The sequence spans 457 residues: Biphenyl dioxygenase subunit alpha (457 aa).

One can recognise a Rieske domain in the interval tryptophan 58–alanine 174. [2Fe-2S] cluster-binding residues include cysteine 100, histidine 102, cysteine 120, and histidine 123. 2 residues coordinate Fe cation: histidine 233 and histidine 239.

This sequence belongs to the bacterial ring-hydroxylating dioxygenase alpha subunit family. As to quaternary structure, heterohexamer consisting of three BphA subunits and three BphE subunits. A ferredoxin (BphF) and a ferredoxin reductase (BphG) must be present to obtain activity. It depends on [2Fe-2S] cluster as a cofactor. Fe cation serves as cofactor.

The catalysed reaction is biphenyl + NADH + O2 + H(+) = (2R,3S)-3-phenylcyclohexa-3,5-diene-1,2-diol + NAD(+). It participates in xenobiotic degradation; biphenyl degradation; 2-hydroxy-2,4-pentadienoate and benzoate from biphenyl: step 1/4. The protein is Biphenyl dioxygenase subunit alpha (bphA) of Comamonas testosteroni (Pseudomonas testosteroni).